The primary structure comprises 274 residues: tRNA-cytidine(32) 2-sulfurtransferase (274 aa).

A PP-loop motif motif is present at residues 40 to 45 (SGGKDS). Residues C115, C118, and C206 each contribute to the [4Fe-4S] cluster site.

The protein belongs to the TtcA family. As to quaternary structure, homodimer. Mg(2+) serves as cofactor. Requires [4Fe-4S] cluster as cofactor.

The protein resides in the cytoplasm. It carries out the reaction cytidine(32) in tRNA + S-sulfanyl-L-cysteinyl-[cysteine desulfurase] + AH2 + ATP = 2-thiocytidine(32) in tRNA + L-cysteinyl-[cysteine desulfurase] + A + AMP + diphosphate + H(+). Its pathway is tRNA modification. Catalyzes the ATP-dependent 2-thiolation of cytidine in position 32 of tRNA, to form 2-thiocytidine (s(2)C32). The sulfur atoms are provided by the cysteine/cysteine desulfurase (IscS) system. The chain is tRNA-cytidine(32) 2-sulfurtransferase from Pseudomonas fluorescens (strain Pf0-1).